Consider the following 345-residue polypeptide: Phosphoribosylformylglycinamidine cyclo-ligase (345 aa).

This sequence belongs to the AIR synthase family.

Its subcellular location is the cytoplasm. It catalyses the reaction 2-formamido-N(1)-(5-O-phospho-beta-D-ribosyl)acetamidine + ATP = 5-amino-1-(5-phospho-beta-D-ribosyl)imidazole + ADP + phosphate + H(+). It functions in the pathway purine metabolism; IMP biosynthesis via de novo pathway; 5-amino-1-(5-phospho-D-ribosyl)imidazole from N(2)-formyl-N(1)-(5-phospho-D-ribosyl)glycinamide: step 2/2. The polypeptide is Phosphoribosylformylglycinamidine cyclo-ligase (Ligilactobacillus salivarius (strain UCC118) (Lactobacillus salivarius)).